The following is a 507-amino-acid chain: MFVQLLTYGLVAASTLQGVFASTKLPILDLPYGRWRAAKYDEAADDGSYGPPCIPGPDAPGFEDPSYKRQQKAAREDCLFLDAYVPGNALRNRGHRKLPVIVWVYGGGYSLGSKDLAIEEGIYDGNSLVQRAAGNAIVITFNYRLSALGWLAGTTMENEGLPNAGLHDQRAVFEWVRDYVHLLGGDRDKVSAWGESAGGGSILSHITANQGIVDPLFKRAVVMSPGLDFPIDRKGSVENQFKAFASRAGCAGQGLACLRAANISQLIEASYKDLGQIGPTPDGRVLKHVFSVDIAQGNYWRHLDSLIISHVYDEGGPFVGNDSTLESLSGFLKSNFPTYATEAVSTLEDYYHLKAPSNESVRAIGSRLIRDAIFTCNIRDILRKYSKKSYLMQYSPKEATHGQDVFALWYSPKLWNVSIPLFSGYQSYFLSHAITGDPNTLRDRDISPPTIAWPKVGDINAEKLENTLDVVDTGYKLISDNQVLKSTCDLWQKLLLDVTKQGGYLDI.

A signal peptide spans 1 to 21 (MFVQLLTYGLVAASTLQGVFA). Serine 196 (acyl-ester intermediate) is an active-site residue. N-linked (GlcNAc...) asparagine glycans are attached at residues asparagine 262, asparagine 321, asparagine 358, and asparagine 416.

This sequence belongs to the type-B carboxylesterase/lipase family.

The protein localises to the secreted. It catalyses the reaction a triacylglycerol + H2O = a diacylglycerol + a fatty acid + H(+). This is Secreted lipase ARB_01498 from Arthroderma benhamiae (strain ATCC MYA-4681 / CBS 112371) (Trichophyton mentagrophytes).